The primary structure comprises 330 residues: Flotillin-like protein FloA (330 aa).

Helical transmembrane passes span 5 to 25 (IILPIIIIAAVLIALAILFTF) and 28 to 48 (VALWISALAAGVKISIFTLIG).

This sequence belongs to the flotillin-like FloA family. As to quaternary structure, homooligomerizes.

The protein localises to the cell membrane. It localises to the membrane raft. Its function is as follows. Found in functional membrane microdomains (FMM) that may be equivalent to eukaryotic membrane rafts. FMMs are highly dynamic and increase in number as cells age. Flotillins are thought to be important factors in membrane fluidity. In Oceanobacillus iheyensis (strain DSM 14371 / CIP 107618 / JCM 11309 / KCTC 3954 / HTE831), this protein is Flotillin-like protein FloA.